Here is a 49-residue protein sequence, read N- to C-terminus: Large ribosomal subunit protein bL33B (49 aa).

This sequence belongs to the bacterial ribosomal protein bL33 family.

This is Large ribosomal subunit protein bL33B from Lacticaseibacillus paracasei (strain ATCC 334 / BCRC 17002 / CCUG 31169 / CIP 107868 / KCTC 3260 / NRRL B-441) (Lactobacillus paracasei).